A 263-amino-acid polypeptide reads, in one-letter code: Chaperone protein ClpE (263 aa).

Positions 1 to 34 (MSKRNAVTTFFTNRVTKALGMTLALMMTCQSAMA) are cleaved as a signal peptide. The segment covering 238-255 (QKKTPTSSGQKASDSLVN) has biased composition (polar residues). The interval 238–263 (QKKTPTSSGQKASDSLVNPSDKADKK) is disordered.

The protein belongs to the periplasmic pilus chaperone family.

Its subcellular location is the periplasm. Its function is as follows. Involved in the biogenesis of the CS31A capsule-like antigen. The sequence is that of Chaperone protein ClpE (clpE) from Escherichia coli.